A 226-amino-acid chain; its full sequence is ATP synthase subunit a (226 aa).

6 helical membrane-spanning segments follow: residues 18-38, 76-96, 105-125, 134-154, 179-199, and 201-221; these read FITGFFVVLTAVLMFLISLGA, YFPLAGTIALYVFFSNMIGII, SWSFTLVLALIVFFYYHFEGI, FAHFAGPVKWLAPFMFPIEII, LIMLLLVPWVIPVAPFMVLFF, and GILQAFVFMILTYVYLAGAVL.

The protein belongs to the ATPase A chain family. As to quaternary structure, F-type ATPases have 2 components, CF(1) - the catalytic core - and CF(0) - the membrane proton channel. CF(1) has five subunits: alpha(3), beta(3), gamma(1), delta(1), epsilon(1). CF(0) has three main subunits: a(1), b(2) and c(9-12). The alpha and beta chains form an alternating ring which encloses part of the gamma chain. CF(1) is attached to CF(0) by a central stalk formed by the gamma and epsilon chains, while a peripheral stalk is formed by the delta and b chains.

The protein resides in the cell inner membrane. Key component of the proton channel; it plays a direct role in the translocation of protons across the membrane. In Helicobacter acinonychis (strain Sheeba), this protein is ATP synthase subunit a.